Reading from the N-terminus, the 465-residue chain is UDP-N-acetylmuramate--L-alanine ligase (465 aa).

114-120 is a binding site for ATP; it reads GAHGKTT.

Belongs to the MurCDEF family.

It is found in the cytoplasm. It carries out the reaction UDP-N-acetyl-alpha-D-muramate + L-alanine + ATP = UDP-N-acetyl-alpha-D-muramoyl-L-alanine + ADP + phosphate + H(+). It functions in the pathway cell wall biogenesis; peptidoglycan biosynthesis. Its function is as follows. Cell wall formation. This is UDP-N-acetylmuramate--L-alanine ligase from Syntrophomonas wolfei subsp. wolfei (strain DSM 2245B / Goettingen).